Consider the following 345-residue polypeptide: Phosphoribosylformylglycinamidine cyclo-ligase (345 aa).

The protein belongs to the AIR synthase family.

Its subcellular location is the cytoplasm. The catalysed reaction is 2-formamido-N(1)-(5-O-phospho-beta-D-ribosyl)acetamidine + ATP = 5-amino-1-(5-phospho-beta-D-ribosyl)imidazole + ADP + phosphate + H(+). The protein operates within purine metabolism; IMP biosynthesis via de novo pathway; 5-amino-1-(5-phospho-D-ribosyl)imidazole from N(2)-formyl-N(1)-(5-phospho-D-ribosyl)glycinamide: step 2/2. The polypeptide is Phosphoribosylformylglycinamidine cyclo-ligase (Prochlorococcus marinus (strain MIT 9313)).